The following is a 673-amino-acid chain: G-protein-signaling modulator 1 (673 aa).

The interval 1 to 507 (MASPAPPVAE…DLLSKFQSSR (507 aa)) is mediates association with membranes. TPR repeat units follow at residues 28 to 61 (CLEL…GTED), 66 to 99 (SAIY…ARTI), 106 to 139 (AKAS…AQEQ), 146 to 178 (ARAL…PPDV), 180 to 199 (ETLH…VKEL), 206 to 239 (GRAY…AKEF), 246 to 279 (RRAY…SRQL), 286 to 319 (AQAC…AQEL), and 326 to 359 (GRAC…SQEI). Positions 361-485 (DRNGELTARM…VRVQVPRTGI (125 aa)) are interaction with STK11/LKB1. At Ser-410 the chain carries Phosphoserine. Omega-N-methylarginine is present on Arg-418. Residues 420–439 (PLDREQNGETHHTGDWRGPG) are compositionally biased toward basic and acidic residues. The segment at 420 to 475 (PLDREQNGETHHTGDWRGPGRDSLPLPMRSRKYQEGPDAIERRPREGSHSPLDSAD) is disordered. A phosphoserine mark is found at Ser-442, Ser-467, Ser-469, Ser-490, and Ser-491. The span at 451-467 (KYQEGPDAIERRPREGS) shows a compositional bias: basic and acidic residues. A GoLoco 1 domain is found at 493–515 (EECFFDLLSKFQSSRMDDQRCPL). Positions 508 to 531 (MDDQRCPLEEGQAGAAEATAAPSV) are disordered. A compositionally biased stretch (low complexity) spans 516–528 (EEGQAGAAEATAA). Residues Ser-543 and Ser-567 each carry the phosphoserine modification. 3 GoLoco domains span residues 546 to 568 (TEEF…RASV), 594 to 616 (GDEF…RCPP), and 628 to 650 (DEDF…RVDL). Residues 644-673 (DEQRVDLAGSPEQEASGLPDPQQQCPPGAS) form a disordered region. Ser-653 carries the post-translational modification Phosphoserine. Positions 664–673 (PQQQCPPGAS) are enriched in polar residues.

It belongs to the GPSM family. Interacts with GNAI1 and GNAI2 preferentially in their GDP-bound state. May also interact with GNAO1. Interacts with INSC/inscuteable and FRMPD1. Interacts with GNAI3. Interacts with STK11/LKB1 and MACF1. Phosphorylation regulates interaction with G(i/o) alpha. In terms of tissue distribution, expressed in neural progenitor cells (at protein level).

It localises to the cytoplasm. Its subcellular location is the cytosol. The protein localises to the endoplasmic reticulum membrane. The protein resides in the golgi apparatus membrane. It is found in the cell membrane. Its function is as follows. Guanine nucleotide dissociation inhibitor (GDI) which functions as a receptor-independent activator of heterotrimeric G-protein signaling. Keeps G(i/o) alpha subunit in its GDP-bound form thus uncoupling heterotrimeric G-proteins signaling from G protein-coupled receptors. Controls spindle orientation and asymmetric cell fate of cerebral cortical progenitors. May also be involved in macroautophagy in intestinal cells. May play a role in drug addiction. The polypeptide is G-protein-signaling modulator 1 (Gpsm1) (Mus musculus (Mouse)).